Consider the following 103-residue polypeptide: MSEERTERPERTERPERPQQRGSGPRKRRPFQRRKVCRFCADKTLVIDYKDPRVLRSFITERGKIVPRRISGNCSAHQREITEAIKRARNIALIPIASTHVIA.

A compositionally biased stretch (basic and acidic residues) spans 1–19; that stretch reads MSEERTERPERTERPERPQ. Residues 1–33 form a disordered region; the sequence is MSEERTERPERTERPERPQQRGSGPRKRRPFQR. Positions 24–33 are enriched in basic residues; the sequence is GPRKRRPFQR.

The protein belongs to the bacterial ribosomal protein bS18 family. Part of the 30S ribosomal subunit. Forms a tight heterodimer with protein bS6.

Functionally, binds as a heterodimer with protein bS6 to the central domain of the 16S rRNA, where it helps stabilize the platform of the 30S subunit. The protein is Small ribosomal subunit protein bS18 of Geobacter sulfurreducens (strain ATCC 51573 / DSM 12127 / PCA).